A 205-amino-acid chain; its full sequence is Small ribosomal subunit protein uS4 (205 aa).

Residues 26-46 are disordered; sequence PVNRREYGPGQHGQRRKQKPS. The 64-residue stretch at 94-157 folds into the S4 RNA-binding domain; that stretch reads RRLDAVVYRL…KQLAIVLDAV (64 aa).

The protein belongs to the universal ribosomal protein uS4 family. In terms of assembly, part of the 30S ribosomal subunit. Contacts protein S5. The interaction surface between S4 and S5 is involved in control of translational fidelity.

Its function is as follows. One of the primary rRNA binding proteins, it binds directly to 16S rRNA where it nucleates assembly of the body of the 30S subunit. With S5 and S12 plays an important role in translational accuracy. The polypeptide is Small ribosomal subunit protein uS4 (Gluconobacter oxydans (strain 621H) (Gluconobacter suboxydans)).